The primary structure comprises 718 residues: Quinolinate synthase, chloroplastic (718 aa).

The segment covering 1 to 22 (MALALSVAPTSSSLSSLLSRTP) has biased composition (low complexity). The disordered stretch occupies residues 1–29 (MALALSVAPTSSSLSSLLSRTPNPSPNFR). A chloroplast-targeting transit peptide spans 1 to 70 (MALALSVAPT…VNASPFSISA (70 aa)). The active-site Cysteine persulfide intermediate is Cys132. Positions 280 and 306 each coordinate iminosuccinate. Position 360 (Cys360) interacts with [4Fe-4S] cluster. Iminosuccinate contacts are provided by residues 389 to 391 (YIN) and Ser411. Cys484 contacts [4Fe-4S] cluster. Iminosuccinate is bound by residues 510 to 512 (HLE) and Thr535. Residue Cys640 coordinates [4Fe-4S] cluster.

Belongs to the quinolinate synthase family. Type 1 subfamily. In terms of assembly, homodimer. Interacts in vitro with NFS2, CpNIFS3 and AO. Part of a Cys defulfurase complex. It depends on [4Fe-4S] cluster as a cofactor. Expressed in roots, leaves, stems and flowers.

It is found in the plastid. Its subcellular location is the chloroplast. It carries out the reaction iminosuccinate + dihydroxyacetone phosphate = quinolinate + phosphate + 2 H2O + H(+). It participates in cofactor biosynthesis; NAD(+) biosynthesis; quinolinate from iminoaspartate: step 1/1. Its function is as follows. Catalyzes the condensation of iminoaspartate with dihydroxyacetone phosphate to form quinolinate. Can complement nadA-deficient E.coli mutant. Essential for the de novo synthesis of NAD. Also participates in cysteine desulfurization mediated by NFS2. Can activate the cysteine desulfurase activity of NFS2 in vitro. In Arabidopsis thaliana (Mouse-ear cress), this protein is Quinolinate synthase, chloroplastic.